A 145-amino-acid chain; its full sequence is Sporulation-specific cell division protein Francci3_3418 (145 aa).

Belongs to the SsgA family.

It localises to the cell septum. Involved in sporulation-specific cell division. This Frankia casuarinae (strain DSM 45818 / CECT 9043 / HFP020203 / CcI3) protein is Sporulation-specific cell division protein Francci3_3418.